Here is a 566-residue protein sequence, read N- to C-terminus: Endoglucanase G (566 aa).

Residues 1–30 (MKKAKAIFSLVVALMVLAIFCFAQNTGSTA) form the signal peptide. The Proton donor role is filled by Glu226. Glu381 (nucleophile) is an active-site residue. The tract at residues 473–494 (GTPQASDPPATPTATPTKPAAS) is disordered. Residues 474-494 (TPQASDPPATPTATPTKPAAS) show a composition bias toward low complexity. The Dockerin domain maps to 497–564 (PSFIYGDINS…LLRSIDKLPH (68 aa)).

This sequence belongs to the glycosyl hydrolase 5 (cellulase A) family.

It catalyses the reaction Endohydrolysis of (1-&gt;4)-beta-D-glucosidic linkages in cellulose, lichenin and cereal beta-D-glucans.. In terms of biological role, this enzyme catalyzes the endohydrolysis of 1,4-beta-glucosidic linkages in cellulose, lichenin and cereal beta-D-glucans. In Acetivibrio thermocellus (strain ATCC 27405 / DSM 1237 / JCM 9322 / NBRC 103400 / NCIMB 10682 / NRRL B-4536 / VPI 7372) (Clostridium thermocellum), this protein is Endoglucanase G (celG).